A 268-amino-acid polypeptide reads, in one-letter code: Tryptophan synthase alpha chain (268 aa).

Active-site proton acceptor residues include glutamate 47 and aspartate 58.

This sequence belongs to the TrpA family. Tetramer of two alpha and two beta chains.

The protein localises to the plastid. The protein resides in the chloroplast. It catalyses the reaction (1S,2R)-1-C-(indol-3-yl)glycerol 3-phosphate + L-serine = D-glyceraldehyde 3-phosphate + L-tryptophan + H2O. Its pathway is amino-acid biosynthesis; L-tryptophan biosynthesis; L-tryptophan from chorismate: step 5/5. In terms of biological role, the alpha subunit is responsible for the aldol cleavage of indoleglycerol phosphate to indole and glyceraldehyde 3-phosphate. This chain is Tryptophan synthase alpha chain, found in Gracilaria tenuistipitata var. liui (Red alga).